Here is a 498-residue protein sequence, read N- to C-terminus: ATP synthase subunit beta, chloroplastic (498 aa).

Residue 172 to 179 (GGAGVGKT) coordinates ATP.

The protein belongs to the ATPase alpha/beta chains family. In terms of assembly, F-type ATPases have 2 components, CF(1) - the catalytic core - and CF(0) - the membrane proton channel. CF(1) has five subunits: alpha(3), beta(3), gamma(1), delta(1), epsilon(1). CF(0) has four main subunits: a(1), b(1), b'(1) and c(9-12).

The protein localises to the plastid. Its subcellular location is the chloroplast thylakoid membrane. It catalyses the reaction ATP + H2O + 4 H(+)(in) = ADP + phosphate + 5 H(+)(out). Produces ATP from ADP in the presence of a proton gradient across the membrane. The catalytic sites are hosted primarily by the beta subunits. The polypeptide is ATP synthase subunit beta, chloroplastic (Cinnamomum camphora (Camphor tree)).